Consider the following 352-residue polypeptide: Heavy metal-associated isoprenylated plant protein 36 (352 aa).

The region spanning 29–92 (YTTWVLRVSI…KIMKAGRHAE (64 aa)) is the HMA domain. The a metal cation site is built by Cys-40 and Cys-43. Disordered regions lie at residues 96-150 (TSME…GNFD), 162-211 (QLQP…GPPE), and 229-252 (PHLH…RHHP). Residues 97–107 (SMENNINNDCN) show a composition bias toward polar residues. Residues 118-128 (ETSGDEDDDEN) are compositionally biased toward acidic residues. Residues 133–148 (NGGGDVGGGGGGGGGN) show a composition bias toward gly residues. Over residues 172 to 183 (KKKKKKKKKKKS) the composition is skewed to basic residues. Gly residues predominate over residues 192–203 (EGGGGGGGGGGP). Position 349 is a cysteine methyl ester (Cys-349). Cys-349 is lipidated: S-farnesyl cysteine. A propeptide spans 350 to 352 (CVM) (removed in mature form).

It belongs to the HIPP family.

In terms of biological role, heavy-metal-binding protein. This is Heavy metal-associated isoprenylated plant protein 36 from Arabidopsis thaliana (Mouse-ear cress).